The chain runs to 183 residues: UPF0316 protein GTNG_0803 (183 aa).

Helical transmembrane passes span 5-25 (IVLV…RTIF), 33-53 (LAAF…SIVF), and 59-79 (YIVM…LEDI).

This sequence belongs to the UPF0316 family.

The protein localises to the cell membrane. This chain is UPF0316 protein GTNG_0803, found in Geobacillus thermodenitrificans (strain NG80-2).